The sequence spans 158 residues: MTKKPDLNDPVLRAKLAKGMGHNYYGEPAWPNDLLYISPVVILGTIACNVGLAVLEPSMIGEPADPFATPLEILPEWYFFPVFQILRTVPNKLLGVLLMVSVPTGLLTVPFLENVNKFQNPFRRPVATTVFLIGTVIALWLGIGATLPIDKSLTLGLF.

3 helical membrane-spanning segments follow: residues 34 to 54 (LLYISPVVILGTIACNVGLAV), 93 to 113 (LLGVLLMVSVPTGLLTVPFLE), and 129 to 149 (TVFLIGTVIALWLGIGATLPI).

It belongs to the cytochrome b family. PetD subfamily. The 4 large subunits of the cytochrome b6-f complex are cytochrome b6, subunit IV (17 kDa polypeptide, petD), cytochrome f and the Rieske protein, while the 4 small subunits are petG, petL, petM and petN. The complex functions as a dimer.

It is found in the plastid. Its subcellular location is the chloroplast thylakoid membrane. Functionally, component of the cytochrome b6-f complex, which mediates electron transfer between photosystem II (PSII) and photosystem I (PSI), cyclic electron flow around PSI, and state transitions. In Liriodendron tulipifera (Tuliptree), this protein is Cytochrome b6-f complex subunit 4.